Reading from the N-terminus, the 248-residue chain is MGESTSLKEILSTLTKRILLIMIVTAAATAAGGLISFFALTPIYENSTQILVNQSKNERKEVQFNDVQTNLQLINTYNVIIKSPAILDEVIKEMGLSMTSQELNDKITVSSEQDSQVVNISVRDENAETAAHIANTIASVFQDKITSIMNVDNVSILSKAEVSEHPSPVSPKPLLNIAIAFAAGLAGSIGLAFLLEHLDNTIKSEEQLESLLDIPVLGTVSTIANEQKTAKTLQGFQSEKTGSGHFGA.

Helical transmembrane passes span 18-38 (ILLI…ISFF) and 174-194 (LLNI…LAFL).

The protein belongs to the CpsC/CapA family. In terms of processing, not phosphorylated in vitro by YwqD.

The protein resides in the cell membrane. It functions in the pathway capsule biogenesis; capsule polysaccharide biosynthesis. In terms of biological role, required for YwqD kinase activity. May bring YwqD and its substrates into contact. Probably involved in the regulation of capsular polysaccharide biosynthesis. The polypeptide is Probable capsular polysaccharide biosynthesis protein YwqC (ywqC) (Bacillus subtilis (strain 168)).